The chain runs to 156 residues: Cyclic pyranopterin monophosphate synthase (156 aa).

Residues 73 to 75 and 110 to 111 each bind substrate; these read LCH and ME. D125 is a catalytic residue.

This sequence belongs to the MoaC family. Homohexamer; trimer of dimers.

The enzyme catalyses (8S)-3',8-cyclo-7,8-dihydroguanosine 5'-triphosphate = cyclic pyranopterin phosphate + diphosphate. It participates in cofactor biosynthesis; molybdopterin biosynthesis. Functionally, catalyzes the conversion of (8S)-3',8-cyclo-7,8-dihydroguanosine 5'-triphosphate to cyclic pyranopterin monophosphate (cPMP). In Pseudomonas putida (strain GB-1), this protein is Cyclic pyranopterin monophosphate synthase.